The sequence spans 199 residues: GTP cyclohydrolase-2 (199 aa).

Residue 52–56 (RMHSE) participates in GTP binding. Cysteine 57, cysteine 68, and cysteine 70 together coordinate Zn(2+). GTP-binding positions include glutamine 73, 94–96 (EGR), and threonine 116. Catalysis depends on aspartate 128, which acts as the Proton acceptor. Arginine 130 serves as the catalytic Nucleophile. GTP contacts are provided by threonine 151 and lysine 156.

It belongs to the GTP cyclohydrolase II family. Requires Zn(2+) as cofactor.

The catalysed reaction is GTP + 4 H2O = 2,5-diamino-6-hydroxy-4-(5-phosphoribosylamino)-pyrimidine + formate + 2 phosphate + 3 H(+). The protein operates within cofactor biosynthesis; riboflavin biosynthesis; 5-amino-6-(D-ribitylamino)uracil from GTP: step 1/4. Its function is as follows. Catalyzes the conversion of GTP to 2,5-diamino-6-ribosylamino-4(3H)-pyrimidinone 5'-phosphate (DARP), formate and pyrophosphate. The chain is GTP cyclohydrolase-2 from Aliivibrio fischeri (strain MJ11) (Vibrio fischeri).